Reading from the N-terminus, the 102-residue chain is Large ribosomal subunit protein bL21 (102 aa).

This sequence belongs to the bacterial ribosomal protein bL21 family. In terms of assembly, part of the 50S ribosomal subunit. Contacts protein L20.

Its function is as follows. This protein binds to 23S rRNA in the presence of protein L20. This chain is Large ribosomal subunit protein bL21, found in Desulfovibrio desulfuricans (strain ATCC 27774 / DSM 6949 / MB).